Consider the following 240-residue polypeptide: Orotidine 5'-phosphate decarboxylase (240 aa).

Substrate contacts are provided by residues D16, K37, 64 to 73 (DLKFHDIPTT), T128, R190, Q199, G219, and R220. K66 functions as the Proton donor in the catalytic mechanism.

It belongs to the OMP decarboxylase family. Type 1 subfamily. As to quaternary structure, homodimer.

The enzyme catalyses orotidine 5'-phosphate + H(+) = UMP + CO2. It functions in the pathway pyrimidine metabolism; UMP biosynthesis via de novo pathway; UMP from orotate: step 2/2. Its function is as follows. Catalyzes the decarboxylation of orotidine 5'-monophosphate (OMP) to uridine 5'-monophosphate (UMP). The protein is Orotidine 5'-phosphate decarboxylase of Prochlorococcus marinus (strain SARG / CCMP1375 / SS120).